Reading from the N-terminus, the 165-residue chain is Phosphopantetheine adenylyltransferase (165 aa).

Residue Ser-10 participates in substrate binding. ATP-binding positions include 10 to 11 (SF) and His-18. Positions 42, 74, and 88 each coordinate substrate. ATP is bound by residues 89–91 (GLR), Glu-99, and 124–130 (WFYTSST).

Belongs to the bacterial CoaD family. Homohexamer. Mg(2+) is required as a cofactor.

It is found in the cytoplasm. It carries out the reaction (R)-4'-phosphopantetheine + ATP + H(+) = 3'-dephospho-CoA + diphosphate. It participates in cofactor biosynthesis; coenzyme A biosynthesis; CoA from (R)-pantothenate: step 4/5. Reversibly transfers an adenylyl group from ATP to 4'-phosphopantetheine, yielding dephospho-CoA (dPCoA) and pyrophosphate. The protein is Phosphopantetheine adenylyltransferase of Syntrophus aciditrophicus (strain SB).